A 667-amino-acid polypeptide reads, in one-letter code: Heat shock protein DDB_G0283913 (667 aa).

Transmembrane regions (helical) follow at residues 2 to 22 (FVGT…KKIL) and 224 to 244 (MFIC…LNEL). A coiled-coil region spans residues 18 to 82 (IKKILKRKKE…ELAKKLNCYI (65 aa)). Positions 432–478 (IDDTIQDNDKSGSEVSTPTISSSSSSPLQPIIKDEKDDNIENKSDEA) are disordered. The segment covering 444–457 (SEVSTPTISSSSSS) has biased composition (low complexity). Basic and acidic residues predominate over residues 463 to 477 (IKDEKDDNIENKSDE). Residues 551–667 (MVFSSGFKPF…VITFKFEKIG (117 aa)) form the sHSP domain.

The protein belongs to the small heat shock protein (HSP20) family.

The protein resides in the membrane. The polypeptide is Heat shock protein DDB_G0283913 (Dictyostelium discoideum (Social amoeba)).